The sequence spans 475 residues: UDP-N-acetylmuramate--L-alanine ligase (475 aa).

Residue 118-124 (GTHGKTT) participates in ATP binding.

It belongs to the MurCDEF family.

It is found in the cytoplasm. It catalyses the reaction UDP-N-acetyl-alpha-D-muramate + L-alanine + ATP = UDP-N-acetyl-alpha-D-muramoyl-L-alanine + ADP + phosphate + H(+). It participates in cell wall biogenesis; peptidoglycan biosynthesis. Its function is as follows. Cell wall formation. In Paracoccus denitrificans (strain Pd 1222), this protein is UDP-N-acetylmuramate--L-alanine ligase.